Reading from the N-terminus, the 819-residue chain is Plastid division protein CDP1, chloroplastic (819 aa).

A chloroplast-targeting transit peptide spans 1–76; that stretch reads MPVAYTFPVL…NAAGGGIHVV (76 aa). The Stromal portion of the chain corresponds to 77–572; the sequence is DNAPSRTSSL…NKIWDEWLSQ (496 aa). Residues 419-439 are a coiled coil; the sequence is EAEALEKLKQLESNSDSAVRN. A helical membrane pass occupies residues 573-593; it reads SSLIGRVSVVALLGCTVFFSL. Residues 594–819 lie on the Chloroplast intermembrane side of the membrane; that stretch reads KLSGIRSGRL…FCQSDIQIQK (226 aa). Residues 762–782 adopt a coiled-coil conformation; the sequence is IAGEAAEIEALLEEAAELVDE.

In terms of assembly, self-interacts. Interacts (via N-terminus) with ARC3 (via MORN domains). Binds (via N-terminus) to FTSZ2 proteins, FTSZ2-1 and FTSZ2-2. Recruited ARC3 to the middle of the plastid where subsequent complex made of CDP1/PARC6, ARC3 and FtsZ proteins can form; this complex enhances the dynamics of Z rings during chloroplast division. Interacts (via C-terminus) with PDV1 (via C-terminus). Interacts with MIND1. In terms of tissue distribution, exclusively expressed in young green tissues such as young cotyledons, shoot apex, emerging leaves and budding inflorescence.

It localises to the plastid. It is found in the chloroplast inner membrane. Its function is as follows. Component of the plastid division machinery required for PDV1 localization to constriction sites. Involved in chloroplast division site placement. Required for the proper formation of FtsZ rings at the division site in nongreen plastids (e.g. etioplasts). Inhibits FtsZ assembly, functioning as an antagonistic regulator of FtsZ dynamics against ARC6, by recruiting ARC3 to the middle of the plastid to facilitate its interaction with FtsZ proteins. Required during stromule biogenesis in the leaf epidermis, especially in non-mesophyll cells plastids. This chain is Plastid division protein CDP1, chloroplastic, found in Arabidopsis thaliana (Mouse-ear cress).